Consider the following 376-residue polypeptide: Fibromodulin (376 aa).

A signal peptide spans 1–18 (MQWASILLLAGLCSLSWA). A Pyrrolidone carboxylic acid modification is found at Q19. 9 positions are modified to sulfotyrosine: Y20, Y38, Y45, Y47, Y50, Y53, Y55, Y63, and Y65. The LRRNT domain occupies 67 to 105 (SPPQPEPRDCPQECDCPPNFPTAMYCDNRNLKYLPFVPS). LRR repeat units lie at residues 106-127 (RMKY…VFDN), 130-151 (GLLW…KKVF), 156-176 (HLER…PLPR), 177-198 (SLRE…ALEG), 201-222 (NLTA…MKGL), 224-245 (SLIL…LPSA), 246-266 (LEQL…YFRG), and 269-289 (KLLY…ASNT). N-linked (GlcNAc...) (keratan sulfate) asparagine glycosylation is present at N127. N166 is a glycosylation site (N-linked (GlcNAc...) (keratan sulfate) asparagine). N201 carries an N-linked (GlcNAc...) (keratan sulfate) asparagine glycan. N291 carries an N-linked (GlcNAc...) (keratan sulfate) asparagine glycan. LRR repeat units follow at residues 294–315 (SLLE…STNL) and 316–335 (ENLY…SFCT). An intrachain disulfide couples C334 to C367. The N-linked (GlcNAc...) asparagine glycan is linked to N341. Residues 344-365 (KLQVLRLDGNEIKRSAMPADAP) form an LRR 11 repeat.

The protein belongs to the small leucine-rich proteoglycan (SLRP) family. SLRP class II subfamily. In terms of assembly, binds to type I and type II collagen. In terms of processing, binds keratan sulfate chains.

The protein resides in the secreted. It is found in the extracellular space. Its subcellular location is the extracellular matrix. Functionally, affects the rate of fibrils formation. May have a primary role in collagen fibrillogenesis. The protein is Fibromodulin (FMOD) of Bos taurus (Bovine).